Consider the following 427-residue polypeptide: 3-phosphoshikimate 1-carboxyvinyltransferase (427 aa).

3 residues coordinate 3-phosphoshikimate: lysine 22, serine 23, and arginine 27. A phosphoenolpyruvate-binding site is contributed by lysine 22. 2 residues coordinate phosphoenolpyruvate: glycine 96 and arginine 124. The 3-phosphoshikimate site is built by serine 169, serine 170, glutamine 171, serine 197, aspartate 313, asparagine 336, and lysine 340. Residue glutamine 171 coordinates phosphoenolpyruvate. Aspartate 313 acts as the Proton acceptor in catalysis. Phosphoenolpyruvate is bound by residues arginine 344, arginine 386, and lysine 411.

Belongs to the EPSP synthase family. Monomer.

Its subcellular location is the cytoplasm. It catalyses the reaction 3-phosphoshikimate + phosphoenolpyruvate = 5-O-(1-carboxyvinyl)-3-phosphoshikimate + phosphate. The protein operates within metabolic intermediate biosynthesis; chorismate biosynthesis; chorismate from D-erythrose 4-phosphate and phosphoenolpyruvate: step 6/7. Its function is as follows. Catalyzes the transfer of the enolpyruvyl moiety of phosphoenolpyruvate (PEP) to the 5-hydroxyl of shikimate-3-phosphate (S3P) to produce enolpyruvyl shikimate-3-phosphate and inorganic phosphate. This Salmonella arizonae (strain ATCC BAA-731 / CDC346-86 / RSK2980) protein is 3-phosphoshikimate 1-carboxyvinyltransferase.